The sequence spans 387 residues: Succinate--CoA ligase [ADP-forming] subunit beta (387 aa).

ATP is bound by residues K46, 53–55 (GRG), E99, A102, and E107. Positions 199 and 213 each coordinate Mg(2+). Residues N264 and 321 to 323 (GIV) each bind substrate.

Belongs to the succinate/malate CoA ligase beta subunit family. Heterotetramer of two alpha and two beta subunits. Requires Mg(2+) as cofactor.

It carries out the reaction succinate + ATP + CoA = succinyl-CoA + ADP + phosphate. It catalyses the reaction GTP + succinate + CoA = succinyl-CoA + GDP + phosphate. It functions in the pathway carbohydrate metabolism; tricarboxylic acid cycle; succinate from succinyl-CoA (ligase route): step 1/1. Succinyl-CoA synthetase functions in the citric acid cycle (TCA), coupling the hydrolysis of succinyl-CoA to the synthesis of either ATP or GTP and thus represents the only step of substrate-level phosphorylation in the TCA. The beta subunit provides nucleotide specificity of the enzyme and binds the substrate succinate, while the binding sites for coenzyme A and phosphate are found in the alpha subunit. In Campylobacter jejuni subsp. doylei (strain ATCC BAA-1458 / RM4099 / 269.97), this protein is Succinate--CoA ligase [ADP-forming] subunit beta.